The chain runs to 198 residues: Recombination protein RecR (198 aa).

A C4-type zinc finger spans residues 56–71 (CTECRDFSETKICAIC). The Toprim domain maps to 79 to 174 (HQLCVVESPP…RPSRLAQGLP (96 aa)).

It belongs to the RecR family.

In terms of biological role, may play a role in DNA repair. It seems to be involved in an RecBC-independent recombinational process of DNA repair. It may act with RecF and RecO. The sequence is that of Recombination protein RecR from Xylella fastidiosa (strain 9a5c).